The sequence spans 329 residues: Biotin synthase (329 aa).

The 231-residue stretch at 48-278 folds into the Radical SAM core domain; sequence FLGNGVDLCS…TKKIAVCGGR (231 aa). Residues Cys-66, Cys-70, and Cys-73 each contribute to the [4Fe-4S] cluster site. [2Fe-2S] cluster contacts are provided by Ser-143 and Cys-203.

The protein belongs to the radical SAM superfamily. Biotin synthase family. In terms of assembly, homodimer. [4Fe-4S] cluster serves as cofactor. Requires [2Fe-2S] cluster as cofactor.

It catalyses the reaction (4R,5S)-dethiobiotin + (sulfur carrier)-SH + 2 reduced [2Fe-2S]-[ferredoxin] + 2 S-adenosyl-L-methionine = (sulfur carrier)-H + biotin + 2 5'-deoxyadenosine + 2 L-methionine + 2 oxidized [2Fe-2S]-[ferredoxin]. It functions in the pathway cofactor biosynthesis; biotin biosynthesis; biotin from 7,8-diaminononanoate: step 2/2. In terms of biological role, catalyzes the conversion of dethiobiotin (DTB) to biotin by the insertion of a sulfur atom into dethiobiotin via a radical-based mechanism. This chain is Biotin synthase, found in Geobacter metallireducens (strain ATCC 53774 / DSM 7210 / GS-15).